Here is a 405-residue protein sequence, read N- to C-terminus: uncharacterized protein (405 aa).

A signal peptide spans 1 to 20; it reads MKAKLALSIIGLVLASLVAG. Cys21 carries the post-translational modification N-acetylcysteine. Residue Cys21 is the site of S-archaeol cysteine attachment.

Belongs to the BMP lipoprotein family.

It is found in the cell membrane. This is an uncharacterized protein from Pyrococcus horikoshii (strain ATCC 700860 / DSM 12428 / JCM 9974 / NBRC 100139 / OT-3).